A 347-amino-acid polypeptide reads, in one-letter code: Probable G-protein coupled receptor 148 (347 aa).

At 1 to 51 (MGDELAPCPVGTTAWPALIQLISKTPCMPQAASNTSLGLGDLRVPSSMLYW) the chain is on the extracellular side. N34 is a glycosylation site (N-linked (GlcNAc...) asparagine). A helical transmembrane segment spans residues 52 to 72 (LFLPSSLLAAATLAVSPLLLV). At 73–85 (TILRNQRLRQEPH) the chain is on the cytoplasmic side. Residues 86 to 106 (YLLPANILLSDLAYILLHMLI) traverse the membrane as a helical segment. The Extracellular portion of the chain corresponds to 107–130 (SSSSLGGWELGRMACGILTDAVFA). The chain crosses the membrane as a helical span at residues 131 to 151 (ACTSTILSFTAIVLHTYLAVI). Over 152–165 (HPLRYLSFMSHGAA) the chain is Cytoplasmic. Residues 166–186 (WKAVALIWLVACCFPTFLIWL) form a helical membrane-spanning segment. Over 187-214 (SKWQDAQLEEQGASYILPPSMGTQPGCG) the chain is Extracellular. The chain crosses the membrane as a helical span at residues 215 to 235 (LLVIVTYTSILCVLFLCTALI). Over 236-261 (ANCFWRIYAEAKTSGIWGQGYSRARG) the chain is Cytoplasmic. Residues 262–282 (TLLIHSVLITLYVSTGVVFSL) traverse the membrane as a helical segment. The Extracellular portion of the chain corresponds to 283–299 (DMVLTRYHHIDSGTHTW). Residues 300–322 (LLAANSEVLMMLPRAMLTYLYLL) form a helical membrane-spanning segment. The Cytoplasmic portion of the chain corresponds to 323–347 (RYRQLLGMVRGHLPSRRHQAIFTIS).

This sequence belongs to the G-protein coupled receptor 1 family. As to expression, expression restricted to nervous system and testis. Is also detected in several tumors types, most notably prostate cancer.

The protein resides in the cell membrane. Its function is as follows. Orphan receptor. The sequence is that of Probable G-protein coupled receptor 148 (GPR148) from Homo sapiens (Human).